The primary structure comprises 181 residues: Probable inosine/xanthosine triphosphatase (181 aa).

Asp-65 is a binding site for Mg(2+).

The protein belongs to the YjjX NTPase family. As to quaternary structure, homodimer. It depends on Mg(2+) as a cofactor. Requires Mn(2+) as cofactor.

It catalyses the reaction XTP + H2O = XDP + phosphate + H(+). It carries out the reaction ITP + H2O = IDP + phosphate + H(+). In terms of biological role, phosphatase that hydrolyzes non-canonical purine nucleotides such as XTP and ITP to their respective diphosphate derivatives. Probably excludes non-canonical purines from DNA/RNA precursor pool, thus preventing their incorporation into DNA/RNA and avoiding chromosomal lesions. This chain is Probable inosine/xanthosine triphosphatase, found in Caldivirga maquilingensis (strain ATCC 700844 / DSM 13496 / JCM 10307 / IC-167).